Consider the following 242-residue polypeptide: Protein LST7 (242 aa).

Residues 48-212 (SCLLQFPEES…NKSKFGRNLV (165 aa)) enclose the uDENN FLCN/SMCR8-type domain.

Required for the nitrogen-regulated transport of amino acid permeases GAP1 and PUT4 from the Golgi to the cell surface. The sequence is that of Protein LST7 (LST7) from Saccharomyces cerevisiae (strain ATCC 204508 / S288c) (Baker's yeast).